A 103-amino-acid polypeptide reads, in one-letter code: Acylphosphatase-2 (103 aa).

Serine 2 carries the N-acetylserine modification. In terms of domain architecture, Acylphosphatase-like spans 13–103; that stretch reads SVDYEVFGRV…LDFSGFSTRY (91 aa). An S-glutathionyl cysteine; alternate modification is found at cysteine 26. Active-site residues include arginine 28 and asparagine 46.

This sequence belongs to the acylphosphatase family. As to quaternary structure, monomer (TU1) or homodimer (TU3) in absence of reducing factors; disulfide linked.

The enzyme catalyses an acyl phosphate + H2O = a carboxylate + phosphate + H(+). Functionally, its physiological role is not yet clear. This chain is Acylphosphatase-2 (ACYP2), found in Meleagris gallopavo (Wild turkey).